Reading from the N-terminus, the 373-residue chain is Lipoyl synthase (373 aa).

The tract at residues 12–36 (HVVSNDHPSSSPLQPGVKQSGEDKI) is disordered. 7 residues coordinate [4Fe-4S] cluster: C81, C86, C92, C107, C111, C114, and S323. The 220-residue stretch at 93–312 (FSHGTATFMI…EEYGMALGFS (220 aa)) folds into the Radical SAM core domain. The segment at 346–373 (PAVSSTEHRERHTIASKSASKTESIRHR) is disordered.

Belongs to the radical SAM superfamily. Lipoyl synthase family. The cofactor is [4Fe-4S] cluster.

The protein localises to the cytoplasm. It carries out the reaction [[Fe-S] cluster scaffold protein carrying a second [4Fe-4S](2+) cluster] + N(6)-octanoyl-L-lysyl-[protein] + 2 oxidized [2Fe-2S]-[ferredoxin] + 2 S-adenosyl-L-methionine + 4 H(+) = [[Fe-S] cluster scaffold protein] + N(6)-[(R)-dihydrolipoyl]-L-lysyl-[protein] + 4 Fe(3+) + 2 hydrogen sulfide + 2 5'-deoxyadenosine + 2 L-methionine + 2 reduced [2Fe-2S]-[ferredoxin]. Its pathway is protein modification; protein lipoylation via endogenous pathway; protein N(6)-(lipoyl)lysine from octanoyl-[acyl-carrier-protein]: step 2/2. Functionally, catalyzes the radical-mediated insertion of two sulfur atoms into the C-6 and C-8 positions of the octanoyl moiety bound to the lipoyl domains of lipoate-dependent enzymes, thereby converting the octanoylated domains into lipoylated derivatives. The polypeptide is Lipoyl synthase (Xylella fastidiosa (strain 9a5c)).